The primary structure comprises 181 residues: Transcriptional repressor NrdR (181 aa).

A zinc finger spans residues 3–34 (CLFCQHTDTRVIDSRVSEDGATIRRRRECEAC). The 91-residue stretch at 49 to 139 (PVIIKKDGGR…VYRSFQDVAD (91 aa)) folds into the ATP-cone domain.

The protein belongs to the NrdR family. It depends on Zn(2+) as a cofactor.

In terms of biological role, negatively regulates transcription of bacterial ribonucleotide reductase nrd genes and operons by binding to NrdR-boxes. The chain is Transcriptional repressor NrdR from Xylella fastidiosa (strain M12).